The chain runs to 188 residues: Inner membrane-spanning protein YciB (188 aa).

5 consecutive transmembrane segments (helical) span residues 22–42, 50–70, 72–92, 121–141, and 149–169; these read IYIA…VTWM, MTLV…VFHN, LFIK…LLVS, FAWA…AFWL, and FKVF…GVYI.

Belongs to the YciB family.

The protein resides in the cell inner membrane. Plays a role in cell envelope biogenesis, maintenance of cell envelope integrity and membrane homeostasis. This Pectobacterium carotovorum subsp. carotovorum (strain PC1) protein is Inner membrane-spanning protein YciB.